A 1133-amino-acid chain; its full sequence is SH3 and PX domain-containing protein 2A (1133 aa).

Residues 4 to 128 enclose the PX domain; sequence YCVQDATVVD…RFFEARPEDV (125 aa). An SH3 1 domain is found at 166–225; that stretch reads MILEQYVVVSNYKKQENSELSLQAGEVVDVIEKNESGWWFVSTSEEQGWVPATYLEAQNG. Thr-256 bears the Phosphothreonine mark. The SH3 2 domain maps to 266–325; it reads SREEKYVTVQPYTSQSKDEIGFEKGVTVEVIRKNLEGWWYIRYLGKEGWAPASYLKKAKD. Phosphoserine occurs at positions 406 and 421. 4 disordered regions span residues 415–446, 505–840, 899–924, and 941–964; these read QRAQ…PPEP, RKKP…EWEG, NEQP…GKSD, and QSKK…SGTP. The 60-residue stretch at 448 to 507 folds into the SH3 3 domain; that stretch reads SVEVEYYTIAEFQSCISDGISFRGGQKAEVIDKNSGGWWYVQIGEKEGWAPASYIDKRKK. The segment covering 546–555 has biased composition (basic and acidic residues); the sequence is DSPRKLKYEE. 2 positions are modified to phosphoserine: Ser-547 and Ser-567. The span at 567 to 576 shows a compositional bias: acidic residues; the sequence is SEPELSEEPV. The span at 577-586 shows a compositional bias: basic and acidic residues; that stretch reads EDRASGERRP. The residue at position 593 (Ser-593) is a Phosphoserine. Over residues 608-620 the composition is skewed to acidic residues; that stretch reads SSEDVALEEETIY. 3 stretches are compositionally biased toward low complexity: residues 634–652, 658–670, and 686–715; these read SARG…SLSL, PKSG…SLLK, and SSAS…SKTS. Ser-644 is subject to Phosphoserine. Thr-731 is modified (phosphothreonine). 3 positions are modified to phosphoserine: Ser-767, Ser-769, and Ser-819. Thr-829 carries the post-translational modification Phosphothreonine. The SH3 4 domain maps to 840 to 899; the sequence is GPATSYMTCSAYQKVQDSEISFPAGVEVQVLEKQESGWWYVRFGELEGWAPSHYLVLDEN. A coiled-coil region spans residues 917–946; the sequence is RQNEGKSDSLEKIERRVQALNTVNQSKKAT. Residues Ser-1002, Ser-1016, Ser-1017, and Ser-1038 each carry the phosphoserine modification. Positions 1029–1059 are disordered; it reads KGRLAERAASQGSDSPLLPAQRNSIPVSPVR. Residues 1072-1133 form the SH3 5 domain; sequence NLKDVYVSIA…VPSNYLEKKN (62 aa).

It belongs to the SH3PXD2 family. Interacts (via N-terminus) with CYBA. Interacts with ADAM12, ADAM15 and ADAM19. Interacts with NOXO1. Interacts (via SH3 domains) with NOXA1. Interacts with FASLG. Interacts (via PX domain) with RAB40B (GTP-bound); interaction promotes invadopodia-mediated extracellular matrix degradation. In terms of processing, tyrosine phosphorylated by SRC. Phosphorylation plays a regulatory role in the protein localization. The intramolecular interaction of the PX domain with the third SH3 domain maintains the protein in the cytoplasm and phosphorylation disrupts this interaction, resulting in the redistribution of the protein from cytoplasm to the perimembrane region. Phosphorylated on serine upon DNA damage, probably by ATM or ATR. In terms of tissue distribution, found in several cancer cell lines, particularly invasive breast carcinomas and melanomas.

It is found in the cytoplasm. The protein localises to the cell projection. The protein resides in the podosome. Adapter protein involved in invadopodia and podosome formation, extracellular matrix degradation and invasiveness of some cancer cells. Binds matrix metalloproteinases (ADAMs), NADPH oxidases (NOXs) and phosphoinositides. Acts as an organizer protein that allows NOX1- or NOX3-dependent reactive oxygen species (ROS) generation and ROS localization. In association with ADAM12, mediates the neurotoxic effect of amyloid-beta peptide. The chain is SH3 and PX domain-containing protein 2A from Homo sapiens (Human).